A 355-amino-acid polypeptide reads, in one-letter code: 6-aminohexanoate-oligomer endohydrolase (355 aa).

Residue Thr-267 is the Nucleophile of the active site.

This sequence belongs to the peptidase S58 family. In terms of assembly, heterotetramer composed of 4 alpha/beta heterodimers. Post-translationally, expressed as an inactive precursor that is cleaved autocatalytically at Asn266/Thr267 to generate an active enzyme composed of an alpha subunit and a beta subunit.

It catalyses the reaction [N-(6-aminohexanoyl)]n + H2O = [N-(6-aminohexanoyl)]n-x + [N-(6-aminohexanoyl)]x.. It functions in the pathway xenobiotic degradation; nylon-6 oligomer degradation. Functionally, involved in the degradation of nylon-6 oligomers. Degrades cyclic and linear oligomers of 6-aminohexanoate (Ahx) with a degree of polymerization greater than three by an endo-type mode. Cannot use Ahx cyclic dimer or the Ahx linear dimer. The protein is 6-aminohexanoate-oligomer endohydrolase of Agromyces sp. (strain KY5R).